The primary structure comprises 527 residues: Glutamate--cysteine ligase (527 aa).

This sequence belongs to the glutamate--cysteine ligase type 1 family. Type 1 subfamily.

The enzyme catalyses L-cysteine + L-glutamate + ATP = gamma-L-glutamyl-L-cysteine + ADP + phosphate + H(+). The protein operates within sulfur metabolism; glutathione biosynthesis; glutathione from L-cysteine and L-glutamate: step 1/2. The sequence is that of Glutamate--cysteine ligase from Bordetella parapertussis (strain 12822 / ATCC BAA-587 / NCTC 13253).